The primary structure comprises 380 residues: Glycerate kinase (380 aa).

The protein belongs to the glycerate kinase type-1 family.

The enzyme catalyses (R)-glycerate + ATP = (2R)-3-phosphoglycerate + ADP + H(+). The polypeptide is Glycerate kinase (glxK) (Halalkalibacterium halodurans (strain ATCC BAA-125 / DSM 18197 / FERM 7344 / JCM 9153 / C-125) (Bacillus halodurans)).